A 674-amino-acid polypeptide reads, in one-letter code: Phosphopantothenoylcysteine decarboxylase subunit VHS3 (674 aa).

Disordered stretches follow at residues 1-164 (MTNK…SILS), 190-230 (LNSD…RPSV), 348-368 (QHNS…NITG), 384-426 (TSSN…SNVV), and 575-674 (VSAG…LQRS). Over residues 15-81 (ASNTLSGAEQ…TSGAVVSNTP (67 aa)) the composition is skewed to polar residues. Thr90 is subject to Phosphothreonine. Positions 106–116 (EQTPPNQVARQ) are enriched in polar residues. Residues 137–150 (NLKDINTKVPKDGE) show a composition bias toward basic and acidic residues. Over residues 152 to 164 (SASSFSTPTSILS) the composition is skewed to polar residues. Basic and acidic residues predominate over residues 198–212 (SPRKEHPHFYVEDPL). Positions 214–230 (TPSVRSRSNSTSPRPSV) are enriched in low complexity. Residues 351–368 (SIDTSFNSTNSNAGNITG) are compositionally biased toward polar residues. A compositionally biased stretch (low complexity) spans 384–395 (TSSNSAASQTNN). A compositionally biased stretch (polar residues) spans 403–426 (MASTTGFPSTLGGSRTYSNSSNVV). A compositionally biased stretch (acidic residues) spans 580–591 (EEEEDEDNDEED). Basic and acidic residues predominate over residues 592-602 (DNKKNDTGGKD). The span at 603–660 (EDNDDDDDDDDDDDDDDDDDDDDDDDDDDDDDDDDDDDDDDDDDDDDDEDDEDEDEDD) shows a compositional bias: acidic residues. Residues 661-674 (EGKKKEDKGGLQRS) are compositionally biased toward basic and acidic residues.

The protein belongs to the HFCD (homooligomeric flavin containing Cys decarboxylase) superfamily. As to quaternary structure, interacts with the C-terminal domain of PPZ1. Component of the phosphopantothenoylcysteine decarboxylase (PPCDC) complex, a heterotrimer composed of CAB3, SIS2 and VHS3.

Functionally, component of the phosphopantothenoylcysteine decarboxylase (PPCDC) involved in the coenzyme A synthesis. Acts as an inhibitory subunit of protein phosphatase PPZ1, which is involved in many cellular processes such as G1-S transition or salt tolerance. The sequence is that of Phosphopantothenoylcysteine decarboxylase subunit VHS3 (VHS3) from Saccharomyces cerevisiae (strain ATCC 204508 / S288c) (Baker's yeast).